A 456-amino-acid polypeptide reads, in one-letter code: Glycerol-3-phosphate acyltransferase 4 (456 aa).

Positions 1–37 (MFLLLPFDSLIVSLLGISLTVLFTLLLVFIIVPAVFG) are cleaved as a signal peptide. Helical transmembrane passes span 156–176 (ISLR…CLLL) and 180–200 (IALA…VGYL). N247 is a glycosylation site (N-linked (GlcNAc...) asparagine). The HXXXXD motif motif lies at 248-253 (HTSPID). N327, N328, and N362 each carry an N-linked (GlcNAc...) asparagine glycan.

Belongs to the 1-acyl-sn-glycerol-3-phosphate acyltransferase family.

The protein resides in the endoplasmic reticulum membrane. It carries out the reaction sn-glycerol 3-phosphate + an acyl-CoA = a 1-acyl-sn-glycero-3-phosphate + CoA. The catalysed reaction is dodecanoyl-CoA + sn-glycerol 3-phosphate = 1-dodecanoyl-sn-glycerol 3-phosphate + CoA. The enzyme catalyses sn-glycerol 3-phosphate + hexadecanoyl-CoA = 1-hexadecanoyl-sn-glycero-3-phosphate + CoA. It catalyses the reaction sn-glycerol 3-phosphate + octadecanoyl-CoA = 1-octadecanoyl-sn-glycero-3-phosphate + CoA. It carries out the reaction sn-glycerol 3-phosphate + (9Z)-octadecenoyl-CoA = 1-(9Z-octadecenoyl)-sn-glycero-3-phosphate + CoA. The catalysed reaction is (9Z,12Z)-octadecadienoyl-CoA + sn-glycerol 3-phosphate = 1-(9Z,12Z)-octadecadienoyl-sn-glycero-3-phosphate + CoA. The protein operates within phospholipid metabolism; CDP-diacylglycerol biosynthesis; CDP-diacylglycerol from sn-glycerol 3-phosphate: step 1/3. Converts glycerol-3-phosphate to 1-acyl-sn-glycerol-3-phosphate (lysophosphatidic acid or LPA) by incorporating an acyl moiety at the sn-1 position of the glycerol backbone. Active against both saturated and unsaturated long-chain fatty acyl-CoAs. Protects cells against lipotoxicity. The protein is Glycerol-3-phosphate acyltransferase 4 of Bos taurus (Bovine).